Consider the following 202-residue polypeptide: Small ribosomal subunit protein uS4 (202 aa).

The 78-residue stretch at 91-168 (SMLSSVLYNS…QKVPDYLEVD (78 aa)) folds into the S4 RNA-binding domain.

The protein belongs to the universal ribosomal protein uS4 family. In terms of assembly, part of the 30S ribosomal subunit. Contacts protein S5. The interaction surface between S4 and S5 is involved in control of translational fidelity.

Functionally, one of the primary rRNA binding proteins, it binds directly to 16S rRNA where it nucleates assembly of the body of the 30S subunit. In terms of biological role, with S5 and S12 plays an important role in translational accuracy. This is Small ribosomal subunit protein uS4 from Ehrlichia ruminantium (strain Welgevonden).